The following is a 769-amino-acid chain: Serine protease HtrA-like (769 aa).

The span at 1–20 (MDIGKKHVIPKSQYRRKRRE) shows a compositional bias: basic residues. The interval 1–390 (MDIGKKHVIP…ATSKLNKGRA (390 aa)) is disordered. Composition is skewed to basic and acidic residues over residues 21–64 (FFHN…ERFK) and 71–108 (LEQR…DVSK). Residues 126–137 (YEQNSEATLSTK) are compositionally biased toward polar residues. Positions 138–186 (STDKVESTEMRKLSSDKNKVGHEEQHVLSKPSEHDKETRIDSESSRTDS) are enriched in basic and acidic residues. Over residues 247–262 (QQSQNEQTKTYTYGDS) the composition is skewed to polar residues. Composition is skewed to basic and acidic residues over residues 264 to 296 (QNDK…HIVD) and 310 to 330 (KTDD…HKQN). The segment covering 331 to 347 (ADSSETVGYQSQSTASH) has biased composition (polar residues). Positions 348-364 (RSTEKRNISINDHDKLN) are enriched in basic and acidic residues. Positions 365-390 (GQKTNTKTSANNNQKKATSKLNKGRA) are enriched in polar residues. A helical transmembrane segment spans residues 410 to 430 (LVILMGIIILIVILNAIFNNV). Catalysis depends on charge relay system residues His-504, Asp-534, and Ser-619. Positions 680–733 (IVSLNSFERQAVKLPGKVKNGVVVDQVDNNGLADQSGLKKGDVITELDGKLLED) constitute a PDZ domain.

Belongs to the peptidase S1C family.

It is found in the cell membrane. The protein is Serine protease HtrA-like of Staphylococcus aureus (strain NCTC 8325 / PS 47).